A 209-amino-acid polypeptide reads, in one-letter code: Large ribosomal subunit protein uL3 (209 aa).

Gln-150 bears the N5-methylglutamine mark.

The protein belongs to the universal ribosomal protein uL3 family. In terms of assembly, part of the 50S ribosomal subunit. Forms a cluster with proteins L14 and L19. Post-translationally, methylated by PrmB.

Its function is as follows. One of the primary rRNA binding proteins, it binds directly near the 3'-end of the 23S rRNA, where it nucleates assembly of the 50S subunit. The sequence is that of Large ribosomal subunit protein uL3 from Cronobacter sakazakii (strain ATCC BAA-894) (Enterobacter sakazakii).